We begin with the raw amino-acid sequence, 84 residues long: Toxin NvePTx1 (84 aa).

The signal sequence occupies residues 1-21 (MFSARLVLVFAVVLCIQLCNA). Residues 22 to 34 (SWLDERAMTQEKR) constitute a propeptide that is removed on maturation.

It belongs to the sea anemone type 5 potassium channel toxin family. Contains 4 disulfide bonds. In terms of tissue distribution, in unfertilized eggs and early post-fertilization stages, is expressed uniformly. In gastrulae, the expression becomes spatially-localized and seems to be absent from the oral and aboral poles. In planulae, the expression is clearly observed in the ectoderm in packed gland cells absent from the two body poles, and upon metamorphosis, the expression diminishes. There is two types of gland cells, one large and elongated and another small and round. This toxin is maternally deposited at both protein and RNA levels.

The protein localises to the secreted. Its subcellular location is the nematocyst. Its function is as follows. Neurotoxin that is probably only defensive. Acts as a voltage-gated potassium channel (Kv) inhibitor. In vivo, induces a rapid increase in swimming speed on zebrafish larvae, as well as death which occurs between 2 and 18 hours later. The sequence is that of Toxin NvePTx1 from Nematostella vectensis (Starlet sea anemone).